A 447-amino-acid chain; its full sequence is Rab GDP dissociation inhibitor alpha (447 aa).

Belongs to the Rab GDI family. As to quaternary structure, interacts with RHOH. Interacts with the non-phosphorylated forms of RAB1A, RAB3A, RAB5A, RAB5B, RAB5C, RAB8A, RAB8B, RAB10, RAB12, RAB35, and RAB43. In terms of tissue distribution, brain; predominant in neural and sensory tissues.

It localises to the cytoplasm. It is found in the golgi apparatus. The protein localises to the trans-Golgi network. In terms of biological role, regulates the GDP/GTP exchange reaction of most Rab proteins by inhibiting the dissociation of GDP from them, and the subsequent binding of GTP to them. Promotes the dissociation of GDP-bound Rab proteins from the membrane and inhibits their activation. Promotes the dissociation of RAB1A, RAB3A, RAB5A and RAB10 from membranes. This Homo sapiens (Human) protein is Rab GDP dissociation inhibitor alpha (GDI1).